Consider the following 228-residue polypeptide: Cytidylate kinase (228 aa).

ATP is bound at residue 12–20 (GPSGSGKGT).

Belongs to the cytidylate kinase family. Type 1 subfamily.

The protein localises to the cytoplasm. The catalysed reaction is CMP + ATP = CDP + ADP. It catalyses the reaction dCMP + ATP = dCDP + ADP. The chain is Cytidylate kinase from Pseudomonas putida (strain ATCC 47054 / DSM 6125 / CFBP 8728 / NCIMB 11950 / KT2440).